A 199-amino-acid polypeptide reads, in one-letter code: UPF0329 protein ECU01_0120/ECU01_1490/ECU08_0050 (199 aa).

This sequence belongs to the UPF0329 family.

This is UPF0329 protein ECU01_0120/ECU01_1490/ECU08_0050 from Encephalitozoon cuniculi (strain GB-M1) (Microsporidian parasite).